Reading from the N-terminus, the 693-residue chain is Elongation factor G (693 aa).

A tr-type G domain is found at 9–283 (ERVRNIGIIA…AVCDYLPSPV (275 aa)). Residues 18-25 (AHIDAGKT), 82-86 (DTPGH), and 136-139 (NKMD) contribute to the GTP site.

This sequence belongs to the TRAFAC class translation factor GTPase superfamily. Classic translation factor GTPase family. EF-G/EF-2 subfamily.

Its subcellular location is the cytoplasm. Catalyzes the GTP-dependent ribosomal translocation step during translation elongation. During this step, the ribosome changes from the pre-translocational (PRE) to the post-translocational (POST) state as the newly formed A-site-bound peptidyl-tRNA and P-site-bound deacylated tRNA move to the P and E sites, respectively. Catalyzes the coordinated movement of the two tRNA molecules, the mRNA and conformational changes in the ribosome. This Dehalococcoides mccartyi (strain ATCC BAA-2266 / KCTC 15142 / 195) (Dehalococcoides ethenogenes (strain 195)) protein is Elongation factor G.